The sequence spans 558 residues: Poly(A) polymerase PAPalpha (558 aa).

Over residues 1 to 17 (MNTKTYGVTEPISTNGP) the composition is skewed to polar residues. The interval 1–20 (MNTKTYGVTEPISTNGPTPK) is disordered. ATP contacts are provided by residues 86–88 (FGS), 99–101 (DID), aspartate 153, lysine 214, tyrosine 223, and 232–233 (GV). Aspartate 99, aspartate 101, and aspartate 153 together coordinate Mg(2+). Residues 516-558 (VYEDGEERPKKSGKKRKKVIKEDGQKRVRNESPASSASVNGSS) are disordered. The span at 535 to 545 (IKEDGQKRVRN) shows a compositional bias: basic and acidic residues. Residues 547–558 (SPASSASVNGSS) show a composition bias toward low complexity.

The protein belongs to the poly(A) polymerase family. Mg(2+) is required as a cofactor. Mn(2+) serves as cofactor.

It is found in the nucleus. It catalyses the reaction RNA(n) + ATP = RNA(n)-3'-adenine ribonucleotide + diphosphate. Its function is as follows. Polymerase that creates the 3'-poly(A) tail of mRNA's. May acquire specificity through interaction with a cleavage and polyadenylation factor. The protein is Poly(A) polymerase PAPalpha (PAPALPHA) of Candida albicans (strain SC5314 / ATCC MYA-2876) (Yeast).